The following is a 462-amino-acid chain: ATP synthase subunit beta 1 (462 aa).

151–158 lines the ATP pocket; it reads GGAGVGKT.

This sequence belongs to the ATPase alpha/beta chains family. F-type ATPases have 2 components, CF(1) - the catalytic core - and CF(0) - the membrane proton channel. CF(1) has five subunits: alpha(3), beta(3), gamma(1), delta(1), epsilon(1). CF(0) has four main subunits: a(1), b(1), b'(1) and c(9-12).

The protein localises to the cell inner membrane. It carries out the reaction ATP + H2O + 4 H(+)(in) = ADP + phosphate + 5 H(+)(out). Functionally, produces ATP from ADP in the presence of a proton gradient across the membrane. The catalytic sites are hosted primarily by the beta subunits. This chain is ATP synthase subunit beta 1, found in Chlorobium luteolum (strain DSM 273 / BCRC 81028 / 2530) (Pelodictyon luteolum).